The sequence spans 172 residues: Envelope protein UL45 (172 aa).

The Intravirion portion of the chain corresponds to Met1–Val27. The chain crosses the membrane as a helical; Signal-anchor for type II membrane protein span at residues Ala28–Val48. The Virion surface segment spans residues Pro49–Pro172.

Belongs to the herpesviridae HHV-1 UL45 family.

It is found in the virion membrane. In terms of biological role, important virulence factor of HSV neurotropism. Seems to be required for glycoprotein B-induced fusion. Dispensable for growth in vitro. The polypeptide is Envelope protein UL45 (Homo sapiens (Human)).